We begin with the raw amino-acid sequence, 174 residues long: Methylamine utilization protein MauL (174 aa).

Its pathway is one-carbon metabolism; methylamine degradation. Probably involved in TTQ prosthetic group biosynthesis. This Methylophilus methylotrophus (Bacterium W3A1) protein is Methylamine utilization protein MauL (mauL).